Here is a 310-residue protein sequence, read N- to C-terminus: Hydroxyacylglutathione hydrolase, mitochondrial (310 aa).

His-104, His-106, Asp-108, His-109, His-160, and Asp-184 together coordinate Zn(2+). Substrate contacts are provided by residues 193–195 (KFF), 223–225 (HEY), and 299–302 (RKEK). His-223 serves as a coordination point for Zn(2+).

Belongs to the metallo-beta-lactamase superfamily. Glyoxalase II family. As to quaternary structure, monomer. Requires Zn(2+) as cofactor.

It localises to the mitochondrion matrix. It is found in the cytoplasm. The enzyme catalyses an S-(2-hydroxyacyl)glutathione + H2O = a 2-hydroxy carboxylate + glutathione + H(+). It carries out the reaction (R)-S-lactoylglutathione + H2O = (R)-lactate + glutathione + H(+). Its function is as follows. Thiolesterase that catalyzes the hydrolysis of S-D-lactoyl-glutathione to form glutathione and D-lactic acid. The chain is Hydroxyacylglutathione hydrolase, mitochondrial (HAGH) from Gallus gallus (Chicken).